The sequence spans 690 residues: UvrABC system protein B (690 aa).

Residues E39–E422 enclose the Helicase ATP-binding domain. ATP is bound at residue G52 to T59. Positions Y105–I128 match the Beta-hairpin motif. The region spanning Q443–I596 is the Helicase C-terminal domain. Residues A640–R675 enclose the UVR domain.

This sequence belongs to the UvrB family. Forms a heterotetramer with UvrA during the search for lesions. Interacts with UvrC in an incision complex.

Its subcellular location is the cytoplasm. Functionally, the UvrABC repair system catalyzes the recognition and processing of DNA lesions. A damage recognition complex composed of 2 UvrA and 2 UvrB subunits scans DNA for abnormalities. Upon binding of the UvrA(2)B(2) complex to a putative damaged site, the DNA wraps around one UvrB monomer. DNA wrap is dependent on ATP binding by UvrB and probably causes local melting of the DNA helix, facilitating insertion of UvrB beta-hairpin between the DNA strands. Then UvrB probes one DNA strand for the presence of a lesion. If a lesion is found the UvrA subunits dissociate and the UvrB-DNA preincision complex is formed. This complex is subsequently bound by UvrC and the second UvrB is released. If no lesion is found, the DNA wraps around the other UvrB subunit that will check the other stand for damage. This Dechloromonas aromatica (strain RCB) protein is UvrABC system protein B.